The sequence spans 256 residues: Kallikrein 1-related peptidase-like b4 (256 aa).

The N-terminal stretch at 1 to 17 (MWFLILFLALSLGGIDA) is a signal peptide. Positions 18 to 24 (APPVQSQ) are activation peptide homolog. The Peptidase S1 domain occupies 18–253 (APPVQSQVDC…FSSWIRETMA (236 aa)). A disulfide bond links C45 and C61. E77 and H84 together coordinate Zn(2+). Disulfide bonds link C147-C214, C179-C193, and C204-C229.

The protein belongs to the peptidase S1 family. Kallikrein subfamily. 7S nerve growth factor is composed of two alpha chains, a beta dimer composed of identical chains, and two gamma chains. Requires Zn(2+) as cofactor. In terms of processing, the presence of Gln-24 prevents cleavage of the activation peptide, which remains attached at the amino end of the mature alpha chain.

The chain is Kallikrein 1-related peptidase-like b4 (Klk1b4) from Mus musculus (Mouse).